We begin with the raw amino-acid sequence, 120 residues long: MKWNPLIPFLLIAVLGIGLTFFLSVKGLDDSREIASGGESKSAEKKDANASPEEIYKANCIACHGENYEGVSGPSLKGVGDKKDVAEIKTKIEKGGNGMPSGLVPADKLDDMAEWVSKIK.

The chain crosses the membrane as a helical span at residues Pro5–Val25. At Lys26–Lys120 the chain is on the periplasmic side. Heme c contacts are provided by Cys60, Cys63, His64, and Met99.

In terms of processing, binds 1 heme c group covalently per subunit.

It is found in the cell membrane. Functionally, not essential for growth on minimal or rich media. The chain is Cytochrome c-550 (cccA) from Bacillus subtilis (strain 168).